Consider the following 385-residue polypeptide: MLYYLIDYIERLYHPPGFQVIRFITVRAALASITALGIALGAGRGIIRWLRQQQLGEQVREGEAAGAISHAHKAGTPTMGGIIILLSVGGATLLWGAVANTYVWLSLVAMGGLGVVGFADDYVKTVRKQKDGLNAWYKVAGQVAVGLFVGSVLYFHPDFAAYNTFTFIPFLKDQVLDYDLFRFLELGVDLGWLVYLPVVVFIVTAVSNAVNLTDGLDGLTTGVTAFVSLGLVALVYVSGNAEFATFLNVMHLPGTGELTVFVAAVTAACFGFLWYNGYPATVFMGDTGALALGGAVGSTILMVRKELLLPLLGIVYFAEALSVIVQTSYFKYTRRRTGTGKRVFRMAPLHHHYEARGLHEAKIVTRFWIVTAITVIAALLILRIR.

10 consecutive transmembrane segments (helical) span residues 23-43 (FITV…LGAG), 79-99 (MGGI…GAVA), 103-123 (VWLS…DDYV), 135-155 (AWYK…VLYF), 186-206 (LGVD…VTAV), 218-238 (GLTT…VYVS), 258-278 (LTVF…YNGY), 282-302 (VFMG…TILM), 307-327 (LLLP…IVQT), and 362-382 (KIVT…LLIL).

Belongs to the glycosyltransferase 4 family. MraY subfamily. Mg(2+) serves as cofactor.

Its subcellular location is the cell inner membrane. The enzyme catalyses UDP-N-acetyl-alpha-D-muramoyl-L-alanyl-gamma-D-glutamyl-meso-2,6-diaminopimeloyl-D-alanyl-D-alanine + di-trans,octa-cis-undecaprenyl phosphate = di-trans,octa-cis-undecaprenyl diphospho-N-acetyl-alpha-D-muramoyl-L-alanyl-D-glutamyl-meso-2,6-diaminopimeloyl-D-alanyl-D-alanine + UMP. Its pathway is cell wall biogenesis; peptidoglycan biosynthesis. Functionally, catalyzes the initial step of the lipid cycle reactions in the biosynthesis of the cell wall peptidoglycan: transfers peptidoglycan precursor phospho-MurNAc-pentapeptide from UDP-MurNAc-pentapeptide onto the lipid carrier undecaprenyl phosphate, yielding undecaprenyl-pyrophosphoryl-MurNAc-pentapeptide, known as lipid I. This Salinibacter ruber (strain DSM 13855 / M31) protein is Phospho-N-acetylmuramoyl-pentapeptide-transferase.